The chain runs to 274 residues: Elongation factor Ts (274 aa).

The segment at 76-79 (TDFV) is involved in Mg(2+) ion dislocation from EF-Tu.

Belongs to the EF-Ts family.

It is found in the cytoplasm. Its function is as follows. Associates with the EF-Tu.GDP complex and induces the exchange of GDP to GTP. It remains bound to the aminoacyl-tRNA.EF-Tu.GTP complex up to the GTP hydrolysis stage on the ribosome. The polypeptide is Elongation factor Ts (Mycobacterium sp. (strain JLS)).